The following is a 250-amino-acid chain: Aquaporin (250 aa).

The Cytoplasmic portion of the chain corresponds to 1–15; the sequence is MTRETLKTLQSTFGE. A helical transmembrane segment spans residues 16 to 36; it reads MVASFVFGFAVYSALLGSALT. Topologically, residues 37–42 are extracellular; sequence EQSAAR. Residues 43–63 form a helical membrane-spanning segment; it reads VIVGLTVGFSGICVIYSFCDV. At 64–86 the chain is on the cytoplasmic side; it reads TVAHFNPAITLAAILTCKLGVLR. Positions 69 to 71 match the NPA motif; sequence NPA. A helical membrane pass occupies residues 87-107; that stretch reads GIGYIVAQYIGFILAVCALLP. The Extracellular segment spans residues 108 to 133; the sequence is CSPVGYKETLNIIRPTPSPFGGDNLN. Residues 134–154 traverse the membrane as a helical segment; the sequence is VFFTEFFLTAILVHVAFATAV. Over 155-179 the chain is Cytoplasmic; sequence NPYKPKTDTEGKFVDPDEEEPVDRR. Residues 180–200 traverse the membrane as a helical segment; that stretch reads ITAPLCIGLTLGFLAFLGLAS. Residues 201–224 lie on the Extracellular side of the membrane; the sequence is SGGAFNPGLTLAPVIMSNTWNHFW. The NPG motif lies at 206–208; sequence NPG. A helical membrane pass occupies residues 225-245; it reads AYFAGQYLGGFVGGLLQVLVL. Topologically, residues 246-250 are cytoplasmic; the sequence is YKLSF.

Belongs to the MIP/aquaporin (TC 1.A.8) family.

It is found in the cell membrane. Functionally, water channel required to facilitate the transport of water across membranes. Involved in osmotolerance. In Encephalitozoon cuniculi (strain GB-M1) (Microsporidian parasite), this protein is Aquaporin (AQP).